Here is a 115-residue protein sequence, read N- to C-terminus: MKFVLLFGVLLVTLFSYSSAEMLDDFDQAVEDELLSLIEKEEARAKECTPRFYDCSHDRHSCCRSELFKDVCTCFYPEGGDNEVCTCQQPKHLKYMEKAADKAKKFGGKIKKWFG.

The N-terminal stretch at methionine 1–alanine 20 is a signal peptide. Positions glutamate 21–arginine 44 are excised as a propeptide. 4 cysteine pairs are disulfide-bonded: cysteine 48–cysteine 63, cysteine 55–cysteine 72, cysteine 62–cysteine 87, and cysteine 74–cysteine 85.

It belongs to the neurotoxin 19 (CSTX) family. 01 subfamily. Expressed by the venom gland.

It localises to the secreted. This is U3-lycotoxin-Ls1a from Lycosa singoriensis (Wolf spider).